Here is a 653-residue protein sequence, read N- to C-terminus: Potassium voltage-gated channel subfamily A member 4 (653 aa).

The Cytoplasmic portion of the chain corresponds to methionine 1–serine 304. The tract at residues glutamine 24–glycine 148 is disordered. Over residues serine 36–glutamate 52 the composition is skewed to low complexity. Positions glycine 81–tyrosine 97 are enriched in basic residues. The residue at position 90 (serine 90) is a Phosphoserine; by PKA. Residue serine 122 is modified to Phosphoserine. Acidic residues predominate over residues serine 122 to glutamate 137. A helical membrane pass occupies residues proline 305–leucine 326. Topologically, residues glutamate 327–proline 370 are extracellular. Residue asparagine 352 is glycosylated (N-linked (GlcNAc...) asparagine). The chain crosses the membrane as a helical span at residues phenylalanine 371–alanine 392. Topologically, residues cysteine 393–isoleucine 403 are cytoplasmic. A helical membrane pass occupies residues methionine 404–alanine 424. Topologically, residues glutamine 425–serine 439 are extracellular. Residues phenylalanine 440–histidine 460 form a helical; Voltage-sensor membrane-spanning segment. Residues serine 461–methionine 475 lie on the Cytoplasmic side of the membrane. The interval lysine 462–methionine 475 is S4-S5 linker. Residues arginine 476–tyrosine 497 form a helical membrane-spanning segment. At phenylalanine 498–isoleucine 511 the chain is on the extracellular side. Positions proline 512–threonine 523 form an intramembrane region, helical. The Selectivity filter signature appears at threonine 524–aspartate 529. The stretch at threonine 524–lysine 531 is an intramembrane region. Residues proline 532–lysine 538 are Extracellular-facing. A helical transmembrane segment spans residues isoleucine 539–tyrosine 567. Residues histidine 568–valine 653 lie on the Cytoplasmic side of the membrane. A Phosphoserine; by PKA modification is found at serine 599. Basic and acidic residues predominate over residues cysteine 629–lysine 640. Residues cysteine 629–valine 653 are disordered. The PDZ-binding signature appears at threonine 651–valine 653.

The protein belongs to the potassium channel family. A (Shaker) (TC 1.A.1.2) subfamily. Kv1.4/KCNA4 sub-subfamily. In terms of assembly, homotetramer and heterotetramer of potassium channel proteins. Interacts with KCNAB1 and KCNAB2. Interacts with DLG1, DLG2 and DLG4 via their PDZ domains. Interacts with SIGMAR1. Detected in a complex with KCNA1. Interacts with KCNA2. Part of a complex containing KCNA1, KCNAB1 and LGI1. Interacts (via cytoplasmic N-terminal domain) with KCNRG. In terms of tissue distribution, expressed in brain, and at lower levels in the testis, lung, kidney, colon and heart. Detected in heart ventricle.

Its subcellular location is the cell membrane. It is found in the cell projection. It localises to the axon. The enzyme catalyses K(+)(in) = K(+)(out). Its activity is regulated as follows. Inhibited by 4-aminopyridine (4-AP), but not by tetraethylammonium (TEA) and charybdotoxin (CTX). Its function is as follows. Voltage-gated potassium channel that mediates transmembrane potassium transport in excitable membranes. Forms tetrameric potassium-selective channels through which potassium ions pass in accordance with their electrochemical gradient. The channel alternates between opened and closed conformations in response to the voltage difference across the membrane. Can form functional homotetrameric channels and heterotetrameric channels that contain variable proportions of KCNA1, KCNA2, KCNA4, KCNA5, and possibly other family members as well; channel properties depend on the type of alpha subunits that are part of the channel. Channel properties are modulated by cytoplasmic beta subunits that regulate the subcellular location of the alpha subunits and promote rapid inactivation. In vivo, membranes probably contain a mixture of heteromeric potassium channel complexes, making it difficult to assign currents observed in intact tissues to any particular potassium channel family member. Homotetrameric KCNA4 forms a potassium channel that opens in response to membrane depolarization, followed by rapid spontaneous channel closure. Likewise, a heterotetrameric channel formed by KCNA1 and KCNA4 shows rapid inactivation. This chain is Potassium voltage-gated channel subfamily A member 4 (KCNA4), found in Homo sapiens (Human).